A 273-amino-acid chain; its full sequence is 2-dehydro-3-deoxyphosphooctonate aldolase (273 aa).

Belongs to the KdsA family.

The protein localises to the cytoplasm. It carries out the reaction D-arabinose 5-phosphate + phosphoenolpyruvate + H2O = 3-deoxy-alpha-D-manno-2-octulosonate-8-phosphate + phosphate. The protein operates within carbohydrate biosynthesis; 3-deoxy-D-manno-octulosonate biosynthesis; 3-deoxy-D-manno-octulosonate from D-ribulose 5-phosphate: step 2/3. It participates in bacterial outer membrane biogenesis; lipopolysaccharide biosynthesis. The chain is 2-dehydro-3-deoxyphosphooctonate aldolase from Citrifermentans bemidjiense (strain ATCC BAA-1014 / DSM 16622 / JCM 12645 / Bem) (Geobacter bemidjiensis).